We begin with the raw amino-acid sequence, 613 residues long: Chaperone protein DnaK (613 aa).

A disordered region spans residues 578 to 613 (MYQSQATQGTSQNSSQNNNSQNNNGDTVDADFKESK). Positions 580-602 (QSQATQGTSQNSSQNNNSQNNNG) are enriched in low complexity.

The protein belongs to the heat shock protein 70 family.

Functionally, acts as a chaperone. The sequence is that of Chaperone protein DnaK from Picrophilus torridus (strain ATCC 700027 / DSM 9790 / JCM 10055 / NBRC 100828 / KAW 2/3).